We begin with the raw amino-acid sequence, 158 residues long: S-ribosylhomocysteine lyase (158 aa).

Positions 54, 58, and 125 each coordinate Fe cation.

Belongs to the LuxS family. Homodimer. Fe cation serves as cofactor.

The enzyme catalyses S-(5-deoxy-D-ribos-5-yl)-L-homocysteine = (S)-4,5-dihydroxypentane-2,3-dione + L-homocysteine. Involved in the synthesis of autoinducer 2 (AI-2) which is secreted by bacteria and is used to communicate both the cell density and the metabolic potential of the environment. The regulation of gene expression in response to changes in cell density is called quorum sensing. Catalyzes the transformation of S-ribosylhomocysteine (RHC) to homocysteine (HC) and 4,5-dihydroxy-2,3-pentadione (DPD). The polypeptide is S-ribosylhomocysteine lyase (Lactococcus lactis subsp. cremoris (strain MG1363)).